Reading from the N-terminus, the 55-residue chain is Large ribosomal subunit protein bL33 (55 aa).

It belongs to the bacterial ribosomal protein bL33 family.

This is Large ribosomal subunit protein bL33 from Rhodopseudomonas palustris (strain BisB5).